The chain runs to 224 residues: MVEYLVSLGADVRSNYDHAIKSAFENGHLQVIKYLISLGSDVSMHYDYILLRASRNGYIDVVKYLIEQGVDPRTNNDKAVRKASKNGRLEIVEYLVTLGADIRIDNDSAVRWASKNGHIKTVEFLVAKGADIRAKNDYSLRHSSKHGHIKMVEYLVAQGADVRADNDYAIKWASGKGHLEVVKYLVEKGADFRADNDCAVKWASQTGRVEIVEYLVSKGAVCPY.

8 ANK repeats span residues 1-14 (MVEYLVSLGADVRS), 15-44 (NYDHAIKSAFENGHLQVIKYLISLGSDVSM), 46-74 (YDYILLRASRNGYIDVVKYLIEQGVDPRT), 75-104 (NNDKAVRKASKNGRLEIVEYLVTLGADIRI), 105-134 (DNDSAVRWASKNGHIKTVEFLVAKGADIRA), 136-164 (NDYSLRHSSKHGHIKMVEYLVAQGADVRA), 165-194 (DNDYAIKWASGKGHLEVVKYLVEKGADFRA), and 196-224 (NDCAVKWASQTGRVEIVEYLVSKGAVCPY).

The sequence is that of Putative ankyrin repeat protein R845 from Acanthamoeba polyphaga mimivirus (APMV).